Consider the following 407-residue polypeptide: Na(+)-translocating NADH-quinone reductase subunit F (407 aa).

Residues 3–23 form a helical membrane-spanning segment; that stretch reads IILGVAMFTGIVMVLVLLILF. A 2Fe-2S ferredoxin-type domain is found at 32–126; it reads GDIAVEVNGD…NLKIELPEEI (95 aa). Residues C69, C75, C78, and C110 each coordinate [2Fe-2S] cluster. Residues 129-269 enclose the FAD-binding FR-type domain; it reads VKKWECEVIS…SGPFGEFFAK (141 aa).

Belongs to the NqrF family. As to quaternary structure, composed of six subunits; NqrA, NqrB, NqrC, NqrD, NqrE and NqrF. [2Fe-2S] cluster is required as a cofactor. The cofactor is FAD.

The protein localises to the cell inner membrane. It catalyses the reaction a ubiquinone + n Na(+)(in) + NADH + H(+) = a ubiquinol + n Na(+)(out) + NAD(+). NQR complex catalyzes the reduction of ubiquinone-1 to ubiquinol by two successive reactions, coupled with the transport of Na(+) ions from the cytoplasm to the periplasm. The first step is catalyzed by NqrF, which accepts electrons from NADH and reduces ubiquinone-1 to ubisemiquinone by a one-electron transfer pathway. This chain is Na(+)-translocating NADH-quinone reductase subunit F, found in Serratia proteamaculans (strain 568).